The following is a 279-amino-acid chain: Phycobilisome 34.5 kDa linker polypeptide, phycoerythrocyanin-associated, rod (279 aa).

Residues Ser-2–Asn-178 form the PBS-linker domain. A CpcD-like domain is found at Ala-226–Ala-278.

This sequence belongs to the phycobilisome linker protein family.

It localises to the cellular thylakoid membrane. Its function is as follows. Rod linker protein, associated with phycoerythrocyanin. Linker polypeptides determine the state of aggregation and the location of the disk-shaped phycobiliprotein units within the phycobilisome and modulate their spectroscopic properties in order to mediate a directed and optimal energy transfer. The polypeptide is Phycobilisome 34.5 kDa linker polypeptide, phycoerythrocyanin-associated, rod (pecC) (Mastigocladus laminosus (Fischerella sp.)).